A 283-amino-acid chain; its full sequence is MGNSALDLNPPNATFHLSTHGSDWLWAAFSVFGVSLLTVVAWTFTRPRGARLFHQIAIVVLTTGSLAYFSMASDLGATPVPVEFRGEGTRQIWFVRYIQWFITFPLLLLELLLATGLSLSDIFTTLFMSIVLVITGLVAALVPSTYKWGYYTFGVSALFYIWYVLLWHGPHTTFAAGGVLRRGYILAAGYLSFLLLLYPIAWACAEGGNVISVTSEMIWYGILDIFAGPIFLFFFLWELRGVDYATFGLHSGKYTDKSAYAPNTAQAAGTVPATTSTGAAGNV.

7 consecutive transmembrane segments (helical) span residues 24-44 (WLWA…AWTF), 52-72 (LFHQ…FSMA), 97-117 (YIQW…ATGL), 122-142 (IFTT…AALV), 148-168 (WGYY…LLWH), 185-205 (ILAA…WACA), and 217-237 (MIWY…FFLW).

Belongs to the archaeal/bacterial/fungal opsin family.

The protein resides in the membrane. The polypeptide is Protein FDD123 (FDD123) (Trametes versicolor (White-rot fungus)).